The chain runs to 343 residues: Palmitoyltransferase ZDHHC4 (343 aa).

Topologically, residues 1–2 (MD) are lumenal. Residues 3–23 (FLVLFLFYLAFLLICVVLICI) form a helical membrane-spanning segment. At 24–67 (FTKSQRLKAVVLGGAQVCSRVIPQCLQRAVQTLLHQLFHTRHPT) the chain is on the cytoplasmic side. Residues 68 to 88 (FIVLHLLLQGLVYAEYTCEVF) form a helical membrane-spanning segment. The Lumenal portion of the chain corresponds to 89–100 (GYCRELEFSLPY). The helical transmembrane segment at 101-121 (LLLPYVLLSVNLVFFTLTCAA) threads the bilayer. Residues 122-193 (NPGTITKANE…NCIGAWNTRY (72 aa)) lie on the Cytoplasmic side of the membrane. Residues 149 to 199 (SRCPTCDLRKPARSKHCRLCDRCVHRFDHHCVWVNNCIGAWNTRYFLIYLL) form the DHHC domain. The active-site S-palmitoyl cysteine intermediate is cysteine 179. A helical membrane pass occupies residues 194-214 (FLIYLLTLTASAATIATVTAA). Residues 215 to 255 (FLLRLVTVSDLYQETYLDDVGHFQAVDTVFLIQHLFLAFPR) lie on the Lumenal side of the membrane. A helical transmembrane segment spans residues 256–276 (IVFLLGFVIVLSMLLAGYLCF). Over 277-343 (ALYLAATNQT…ATPSYKKKEK (67 aa)) the chain is Cytoplasmic. The Di-lysine motif signature appears at 340–343 (KKEK).

Belongs to the DHHC palmitoyltransferase family. In terms of assembly, interacts with CPT1A.

The protein localises to the endoplasmic reticulum membrane. Its subcellular location is the golgi apparatus membrane. The protein resides in the cell membrane. It catalyses the reaction L-cysteinyl-[protein] + hexadecanoyl-CoA = S-hexadecanoyl-L-cysteinyl-[protein] + CoA. In terms of biological role, palmitoyltransferase that could catalyze the addition of palmitate onto protein substrates including the D(2) dopamine receptor DRD2, GSK3B or MAVS. Mediates GSK3B palmitoylation to prevent its AKT1-mediated phosphorylation leading to activation of the STAT3 signaling pathway. Also catalyzes MAVS palmitoylation which promotes its stabilization and activation by inhibiting 'Lys-48'- but facilitating 'Lys-63'-linked ubiquitination. This chain is Palmitoyltransferase ZDHHC4, found in Mus musculus (Mouse).